Consider the following 850-residue polypeptide: Mitochondrial escape protein 2 (850 aa).

A mitochondrion-targeting transit peptide spans 1 to 44 (MLLVRTTSLNVSRMPVPCLARGIGILKGKYRLANLMNAQPSVRH). Residues 44–66 (HVSSEIQQKDQQAGESNTATDTG) form a disordered region. The Mitochondrial matrix portion of the chain corresponds to 45 to 287 (VSSEIQQKDQ…VSNFFTNHTR (243 aa)). The span at 47-64 (SEIQQKDQQAGESNTATD) shows a compositional bias: polar residues. In terms of domain architecture, RRM spans 198–272 (TTIVIKFQGP…TVLHIQYENI (75 aa)). Residues 288–308 (IAIPVLFALLSIFAVLVFDPI) form a helical membrane-spanning segment. The Mitochondrial intermembrane segment spans residues 309–850 (REFSIEQKIT…CEEEIKNLSK (542 aa)). Residues 607–621 (KGENVKEPESEKETA) show a composition bias toward basic and acidic residues. The interval 607–633 (KGENVKEPESEKETAENNDSDSEADTS) is disordered.

It belongs to the YME2 family.

Its subcellular location is the mitochondrion inner membrane. Its function is as follows. Plays a role in maintaining the mitochondrial genome and in controlling the mtDNA escape. Involved in the regulation of mtDNA nucleotide structure and number. May have a dispensable role in early maturation of pre-rRNA. The sequence is that of Mitochondrial escape protein 2 (YME2) from Saccharomyces cerevisiae (strain ATCC 204508 / S288c) (Baker's yeast).